Reading from the N-terminus, the 322-residue chain is Cytochrome c biogenesis protein CcsA (322 aa).

The next 8 helical transmembrane spans lie at 15 to 35 (FSIV…VDGI), 45 to 65 (GMIV…TYSG), 72 to 92 (LYES…VPYF), 98 to 120 (YLST…GLLT), 144 to 164 (MILG…LLVI), 226 to 246 (GISL…VWAN), 253 to 273 (WNWD…AIYL), and 287 to 307 (AIVA…VNLL).

This sequence belongs to the CcmF/CycK/Ccl1/NrfE/CcsA family. In terms of assembly, may interact with Ccs1.

The protein resides in the plastid. It is found in the chloroplast thylakoid membrane. Its function is as follows. Required during biogenesis of c-type cytochromes (cytochrome c6 and cytochrome f) at the step of heme attachment. This Coffea arabica (Arabian coffee) protein is Cytochrome c biogenesis protein CcsA.